The following is an 82-amino-acid chain: MDNVADRVKKVVVEQLGVNEDEVTNEASFVDDLGADSLDTVELVMALEEEFDCEIPDEEAEKIATVQQAIDYVSAHIPAKDA.

The 76-residue stretch at D2–I77 folds into the Carrier domain. The residue at position 37 (S37) is an O-(pantetheine 4'-phosphoryl)serine.

Belongs to the acyl carrier protein (ACP) family. Post-translationally, 4'-phosphopantetheine is transferred from CoA to a specific serine of apo-ACP by AcpS. This modification is essential for activity because fatty acids are bound in thioester linkage to the sulfhydryl of the prosthetic group.

Its subcellular location is the cytoplasm. It participates in lipid metabolism; fatty acid biosynthesis. Functionally, carrier of the growing fatty acid chain in fatty acid biosynthesis. The protein is Acyl carrier protein of Acidithiobacillus ferrooxidans (strain ATCC 23270 / DSM 14882 / CIP 104768 / NCIMB 8455) (Ferrobacillus ferrooxidans (strain ATCC 23270)).